The chain runs to 394 residues: Elongation factor Tu (394 aa).

Residues lysine 10–glutamate 204 form the tr-type G domain. Residues glycine 19–threonine 26 form a G1 region. Residue glycine 19 to threonine 26 coordinates GTP. Threonine 26 is a binding site for Mg(2+). The segment at glycine 60–asparagine 64 is G2. Residues aspartate 81–glycine 84 are G3. GTP contacts are provided by residues aspartate 81–histidine 85 and asparagine 136–aspartate 139. The G4 stretch occupies residues asparagine 136–aspartate 139. Residues serine 174 to leucine 176 form a G5 region.

The protein belongs to the TRAFAC class translation factor GTPase superfamily. Classic translation factor GTPase family. EF-Tu/EF-1A subfamily. In terms of assembly, monomer.

The protein resides in the cytoplasm. The enzyme catalyses GTP + H2O = GDP + phosphate + H(+). In terms of biological role, GTP hydrolase that promotes the GTP-dependent binding of aminoacyl-tRNA to the A-site of ribosomes during protein biosynthesis. This chain is Elongation factor Tu, found in Histophilus somni (strain 129Pt) (Haemophilus somnus).